Here is a 129-residue protein sequence, read N- to C-terminus: Large ribosomal subunit protein bL17 (129 aa).

This sequence belongs to the bacterial ribosomal protein bL17 family. As to quaternary structure, part of the 50S ribosomal subunit. Contacts protein L32.

In Pseudomonas aeruginosa (strain UCBPP-PA14), this protein is Large ribosomal subunit protein bL17.